A 234-amino-acid polypeptide reads, in one-letter code: uncharacterized protein (234 aa).

10–34 (VVTGASSGIGASIAETLANQGVKVV) contacts NADP(+). S143 contributes to the substrate binding site. The active-site Proton acceptor is Y156.

The protein belongs to the short-chain dehydrogenases/reductases (SDR) family.

This is an uncharacterized protein from Staphylococcus saprophyticus subsp. saprophyticus (strain ATCC 15305 / DSM 20229 / NCIMB 8711 / NCTC 7292 / S-41).